The sequence spans 131 residues: Transcription antitermination protein NusB (131 aa).

This sequence belongs to the NusB family.

Functionally, involved in transcription antitermination. Required for transcription of ribosomal RNA (rRNA) genes. Binds specifically to the boxA antiterminator sequence of the ribosomal RNA (rrn) operons. In Campylobacter hominis (strain ATCC BAA-381 / DSM 21671 / CCUG 45161 / LMG 19568 / NCTC 13146 / CH001A), this protein is Transcription antitermination protein NusB.